The sequence spans 239 residues: Serine protease SplC (239 aa).

The signal sequence occupies residues 1–36 (MNKNIVIKSMAALAILTSVTGINAAVVDETQQIANA). Catalysis depends on charge relay system residues H75, D113, and S193.

The protein belongs to the peptidase S1B family.

It localises to the secreted. The polypeptide is Serine protease SplC (splC) (Staphylococcus aureus (strain bovine RF122 / ET3-1)).